The primary structure comprises 392 residues: Ceramide synthase 5 (392 aa).

At 1-46 the chain is on the lumenal side; the sequence is MATAAQGPLSLLWGWLWSERFWLPENVSWADLEGPADGYGYPRGRH. Asn-26 carries an N-linked (GlcNAc...) asparagine glycan. The chain crosses the membrane as a helical span at residues 47–67; sequence ILSVFPLAAGIFFVRLLFERF. The tract at residues 75-136 is homeobox-like; sequence CIGIEDSGPY…RHRRNQDKPP (62 aa). Positions 139–340 constitute a TLC domain; it reads TKFCESMWRF…IARIALKALI (202 aa). 4 helical membrane passes run 148 to 168, 183 to 203, 214 to 234, and 272 to 292; these read FTFY…SPWF, LSSG…SLMF, FLIM…SYIN, and LFVI…PFWI. The Last loop motif motif lies at 299 to 309; that stretch reads ESWEIIGPYAS. The chain crosses the membrane as a helical span at residues 311–331; sequence WLLNGLLLTLQLLHVIWSYLI. Residues 332–392 are Cytoplasmic-facing; sequence ARIALKALIR…HMGGSYWAEE (61 aa). The disordered stretch occupies residues 349–392; the sequence is RSDVESSSEEEDVTTCTKSPCDSSSSNGANRVNGHMGGSYWAEE. Over residues 362 to 378 the composition is skewed to polar residues; it reads TTCTKSPCDSSSSNGAN.

Interacts with PAQR4; the interaction regulates the stability and activity of CERS5 and is inhibited in presence of ceramides. In terms of processing, phosphorylated at the C-terminus by CK2.

It localises to the endoplasmic reticulum membrane. It catalyses the reaction a sphingoid base + hexadecanoyl-CoA = an N-hexadecanoyl-sphingoid base + CoA + H(+). The catalysed reaction is sphinganine + hexadecanoyl-CoA = N-hexadecanoylsphinganine + CoA + H(+). The enzyme catalyses hexadecasphinganine + hexadecanoyl-CoA = N-hexadecanoylhexadecasphinganine + CoA + H(+). It carries out the reaction sphing-4-enine + hexadecanoyl-CoA = N-hexadecanoylsphing-4-enine + CoA + H(+). It catalyses the reaction 2-hydroxyhexadecanoyl-CoA + sphinganine = N-(2-hydroxyhexadecanoyl)-sphinganine + CoA + H(+). The catalysed reaction is sphinganine + tetradecanoyl-CoA = N-(tetradecanoyl)-sphinganine + CoA + H(+). The enzyme catalyses sphinganine + octadecanoyl-CoA = N-(octadecanoyl)-sphinganine + CoA + H(+). It carries out the reaction sphinganine + (9Z)-octadecenoyl-CoA = N-(9Z-octadecenoyl)-sphinganine + CoA + H(+). It catalyses the reaction a fatty acyl-CoA + sphing-4-enine = an N-acylsphing-4-enine + CoA + H(+). It functions in the pathway lipid metabolism; sphingolipid metabolism. Inhibited by fumonisin B1. Functionally, ceramide synthase that catalyzes the transfer of the acyl chain from acyl-CoA to a sphingoid base, with high selectivity toward palmitoyl-CoA (hexadecanoyl-CoA; C16:0-CoA). Can use other acyl donors, but with less efficiency. N-acylates sphinganine and sphingosine bases to form dihydroceramides and ceramides in de novo synthesis and salvage pathways, respectively. Plays a role in de novo ceramide synthesis and surfactant homeostasis in pulmonary epithelia. The sequence is that of Ceramide synthase 5 from Homo sapiens (Human).